A 300-amino-acid chain; its full sequence is Acetyl-coenzyme A carboxylase carboxyl transferase subunit beta 2 (300 aa).

In terms of domain architecture, CoA carboxyltransferase N-terminal spans 26-294; it reads VWIKCPSCRE…ATAHKSEPIV (269 aa). Residues C30, C33, C49, and C51 each contribute to the Zn(2+) site. The C4-type zinc-finger motif lies at 30–51; sequence CPSCRELIYHKQLAERMKVCRC.

Belongs to the AccD/PCCB family. In terms of assembly, acetyl-CoA carboxylase is a heterohexamer composed of biotin carboxyl carrier protein (AccB), biotin carboxylase (AccC) and two subunits each of ACCase subunit alpha (AccA) and ACCase subunit beta (AccD). Requires Zn(2+) as cofactor.

It localises to the cytoplasm. The catalysed reaction is N(6)-carboxybiotinyl-L-lysyl-[protein] + acetyl-CoA = N(6)-biotinyl-L-lysyl-[protein] + malonyl-CoA. It participates in lipid metabolism; malonyl-CoA biosynthesis; malonyl-CoA from acetyl-CoA: step 1/1. In terms of biological role, component of the acetyl coenzyme A carboxylase (ACC) complex. Biotin carboxylase (BC) catalyzes the carboxylation of biotin on its carrier protein (BCCP) and then the CO(2) group is transferred by the transcarboxylase to acetyl-CoA to form malonyl-CoA. The chain is Acetyl-coenzyme A carboxylase carboxyl transferase subunit beta 2 from Roseiflexus sp. (strain RS-1).